A 222-amino-acid chain; its full sequence is Cytochrome b6 (222 aa).

The chain crosses the membrane as a helical span at residues 39–59; sequence IFYCLGGITLVCFLIQFATGF. C42 contacts heme c. Heme b contacts are provided by H93 and H107. Transmembrane regions (helical) follow at residues 97–117, 123–143, and 193–213; these read ASMM…TGGF, LTWV…VTGY, and LHTF…FLMI. Residues H194 and H209 each coordinate heme b.

The protein belongs to the cytochrome b family. PetB subfamily. As to quaternary structure, the 4 large subunits of the cytochrome b6-f complex are cytochrome b6, subunit IV (17 kDa polypeptide, PetD), cytochrome f and the Rieske protein, while the 4 small subunits are PetG, PetL, PetM and PetN. The complex functions as a dimer. Requires heme b as cofactor. The cofactor is heme c.

The protein localises to the cellular thylakoid membrane. In terms of biological role, component of the cytochrome b6-f complex, which mediates electron transfer between photosystem II (PSII) and photosystem I (PSI), cyclic electron flow around PSI, and state transitions. This Trichodesmium erythraeum (strain IMS101) protein is Cytochrome b6.